The sequence spans 1036 residues: Presequence protease, mitochondrial (1036 aa).

A mitochondrion-targeting transit peptide spans 1-15 (MWRFSGRRGLCAVQR). His104 contributes to the Zn(2+) binding site. Glu107 functions as the Proton acceptor in the catalytic mechanism. His108 and Glu205 together coordinate Zn(2+). Cys119 and Cys556 form a disulfide bridge. An N6-acetyllysine modification is found at Lys759. Lys770 carries the N6-acetyllysine; alternate modification. Lys770 bears the N6-succinyllysine; alternate mark. The interval 806-833 (SKKERKPVRPHIVEKPTPSGPSGAAHVS) is disordered. Lys848 is modified (N6-succinyllysine). Lys883 is subject to N6-acetyllysine. Lys945 is modified (N6-succinyllysine).

It belongs to the peptidase M16 family. PreP subfamily. In terms of assembly, monomer and homodimer; homodimerization is induced by binding of the substrate. Zn(2+) serves as cofactor. A disulfide bond locks the enzyme in the closed conformation preventing substrate entry into the catalytic chamber.

The protein resides in the mitochondrion matrix. Its activity is regulated as follows. Mainly exists in a closed and catalytically competent conformation but a closed-to-open switch allows substrate entry into the catalytic chamber. Substrate binding induces closure and dimerization. A disulfide bond may lock the enzyme in a closed conformation preventing substrate entry into the catalytic chamber, participating in redox regulation of the enzyme. Inhibited by metal-chelating agents. Inhibited by nickel and zinc excess, and slightly activated by manganese. In terms of biological role, metalloendopeptidase of the mitochondrial matrix that functions in peptide cleavage and degradation rather than in protein processing. Has an ATP-independent activity. Specifically cleaves peptides in the range of 5 to 65 residues. Shows a preference for cleavage after small polar residues and before basic residues, but without any positional preference. Degrades the transit peptides of mitochondrial proteins after their cleavage. Also degrades other unstructured peptides. It is also able to degrade amyloid-beta protein 40, one of the peptides produced by APP processing, when it accumulates in mitochondrion. It is a highly efficient protease, at least toward amyloid-beta protein 40. Cleaves that peptide at a specific position and is probably not processive, releasing digested peptides intermediates that can be further cleaved subsequently. It is also able to degrade amyloid-beta protein 42. This is Presequence protease, mitochondrial from Mus musculus (Mouse).